The sequence spans 414 residues: Serine-type anaerobic sulfatase-maturating enzyme (414 aa).

The region spanning threonine 5–lysine 250 is the Radical SAM core domain. Residues cysteine 24 and cysteine 28 each coordinate [4Fe-4S] cluster. An S-adenosyl-L-methionine-binding site is contributed by tyrosine 30. Cysteine 31 contributes to the [4Fe-4S] cluster binding site. S-adenosyl-L-methionine contacts are provided by glycine 76, serine 131, and arginine 143. Residues cysteine 276, cysteine 282, and cysteine 297 each coordinate [4Fe-4S] cluster. Aspartate 298 serves as the catalytic Proton acceptor. 5 residues coordinate [4Fe-4S] cluster: cysteine 339, cysteine 342, cysteine 348, cysteine 352, and cysteine 371.

Belongs to the radical SAM superfamily. Anaerobic sulfatase-maturating enzyme family. [4Fe-4S] cluster serves as cofactor.

The catalysed reaction is L-seryl-[sulfatase] + S-adenosyl-L-methionine = 3-oxo-L-alanyl-[sulfatase] + 5'-deoxyadenosine + L-methionine + H(+). It functions in the pathway protein modification; sulfatase oxidation. Its function is as follows. Involved in 'Ser-type' sulfatase maturation under anaerobic conditions. Links the heparin and the chondroitin sulfate utilization pathways which contribute to the colonization of the intestinal tract. May catalyze the activation of chondro-6-sulfatase, i.e. the post-translational modification of a specific serine residue into 3-oxoalanine (also known as C(alpha)-formylglycine (FGly)), by a free radical chemical mechanism initiated via the reductive cleavage of S-adenosyl-L-methionine (SAM). Is also able to oxidize a cysteine residue in a synthetic substrate to FGly in vitro, but not in a recombinant Cys-type sulfatase in vivo. But since B.thetaiotaomicron possesses only Ser-type sulfatases, the oxidation of serine residues to FGly is the sole physiological activity. The polypeptide is Serine-type anaerobic sulfatase-maturating enzyme (chuR) (Bacteroides thetaiotaomicron (strain ATCC 29148 / DSM 2079 / JCM 5827 / CCUG 10774 / NCTC 10582 / VPI-5482 / E50)).